A 437-amino-acid polypeptide reads, in one-letter code: Lipid II isoglutaminyl synthase (glutamine-hydrolyzing) subunit MurT (437 aa).

4 residues coordinate Zn(2+): Cys-202, Cys-205, Cys-224, and Cys-226. Residue Asp-349 is part of the active site.

This sequence belongs to the MurCDEF family. MurT subfamily. In terms of assembly, forms a heterodimer with GatD.

The catalysed reaction is beta-D-GlcNAc-(1-&gt;4)-Mur2Ac(oyl-L-Ala-gamma-D-Glu-L-Lys-D-Ala-D-Ala)-di-trans,octa-cis-undecaprenyl diphosphate + L-glutamine + ATP + H2O = beta-D-GlcNAc-(1-&gt;4)-Mur2Ac(oyl-L-Ala-D-isoglutaminyl-L-Lys-D-Ala-D-Ala)-di-trans,octa-cis-undecaprenyl diphosphate + L-glutamate + ADP + phosphate + H(+). It catalyses the reaction beta-D-GlcNAc-(1-&gt;4)-Mur2Ac(oyl-L-Ala-gamma-D-Glu-L-Lys-D-Ala-D-Ala)-di-trans,octa-cis-undecaprenyl diphosphate + ATP = beta-D-GlcNAc-(1-&gt;4)-Mur2Ac(oyl-L-Ala-gamma-D-O-P-Glu-L-Lys-D-Ala-D-Ala)-di-trans,octa-cis-undecaprenyl diphosphate + ADP. It carries out the reaction beta-D-GlcNAc-(1-&gt;4)-Mur2Ac(oyl-L-Ala-gamma-D-O-P-Glu-L-Lys-D-Ala-D-Ala)-di-trans,octa-cis-undecaprenyl diphosphate + NH4(+) = beta-D-GlcNAc-(1-&gt;4)-Mur2Ac(oyl-L-Ala-D-isoglutaminyl-L-Lys-D-Ala-D-Ala)-di-trans,octa-cis-undecaprenyl diphosphate + phosphate + H(+). It participates in cell wall biogenesis; peptidoglycan biosynthesis. Its function is as follows. The lipid II isoglutaminyl synthase complex catalyzes the formation of alpha-D-isoglutamine in the cell wall lipid II stem peptide. The MurT subunit catalyzes the ATP-dependent amidation of D-glutamate residue of lipid II, converting it to an isoglutamine residue. This is Lipid II isoglutaminyl synthase (glutamine-hydrolyzing) subunit MurT from Staphylococcus aureus (strain N315).